The following is an 885-amino-acid chain: Alanine--tRNA ligase (885 aa).

Residues His569, His573, Cys672, and His676 each contribute to the Zn(2+) site.

It belongs to the class-II aminoacyl-tRNA synthetase family. The cofactor is Zn(2+).

The protein localises to the cytoplasm. It catalyses the reaction tRNA(Ala) + L-alanine + ATP = L-alanyl-tRNA(Ala) + AMP + diphosphate. Its function is as follows. Catalyzes the attachment of alanine to tRNA(Ala) in a two-step reaction: alanine is first activated by ATP to form Ala-AMP and then transferred to the acceptor end of tRNA(Ala). Also edits incorrectly charged Ser-tRNA(Ala) and Gly-tRNA(Ala) via its editing domain. This is Alanine--tRNA ligase from Chlorobaculum tepidum (strain ATCC 49652 / DSM 12025 / NBRC 103806 / TLS) (Chlorobium tepidum).